The primary structure comprises 225 residues: UPF0758 protein Swoo_4561 (225 aa).

Positions 102 to 224 constitute an MPN domain; the sequence is ILSDPDLTRD…IVSFAERGWI (123 aa). Zn(2+) is bound by residues His173, His175, and Asp186. Residues 173-186 carry the JAMM motif motif; the sequence is HNHPSGVAEPSHAD.

It belongs to the UPF0758 family.

In Shewanella woodyi (strain ATCC 51908 / MS32), this protein is UPF0758 protein Swoo_4561.